We begin with the raw amino-acid sequence, 103 residues long: Co-chaperonin GroES (103 aa).

It belongs to the GroES chaperonin family. As to quaternary structure, heptamer of 7 subunits arranged in a ring. Interacts with the chaperonin GroEL.

It localises to the cytoplasm. Functionally, together with the chaperonin GroEL, plays an essential role in assisting protein folding. The GroEL-GroES system forms a nano-cage that allows encapsulation of the non-native substrate proteins and provides a physical environment optimized to promote and accelerate protein folding. GroES binds to the apical surface of the GroEL ring, thereby capping the opening of the GroEL channel. The sequence is that of Co-chaperonin GroES from Prochlorococcus marinus (strain MIT 9313).